A 120-amino-acid chain; its full sequence is Large ribosomal subunit protein eL18 (120 aa).

The protein belongs to the eukaryotic ribosomal protein eL18 family. As to quaternary structure, part of the 50S ribosomal subunit.

The polypeptide is Large ribosomal subunit protein eL18 (Pyrococcus furiosus (strain ATCC 43587 / DSM 3638 / JCM 8422 / Vc1)).